The following is a 343-amino-acid chain: Protein RecA (343 aa).

Residue 66-73 coordinates ATP; it reads GPESSGKT.

It belongs to the RecA family.

Its subcellular location is the cytoplasm. Functionally, can catalyze the hydrolysis of ATP in the presence of single-stranded DNA, the ATP-dependent uptake of single-stranded DNA by duplex DNA, and the ATP-dependent hybridization of homologous single-stranded DNAs. It interacts with LexA causing its activation and leading to its autocatalytic cleavage. This chain is Protein RecA, found in Rickettsia bellii (strain RML369-C).